The following is a 235-amino-acid chain: RNA pyrophosphohydrolase (235 aa).

In terms of domain architecture, Nudix hydrolase spans 6–149 (GFRPNVGIIL…KREVYQLALS (144 aa)). The Nudix box motif lies at 38 to 59 (GGIKYGETPEQAMFRELHEEVG). Residues 161-235 (APLSPYGRGG…PDDTAPKDNS (75 aa)) are disordered. The span at 171 to 196 (QHRERDGRDARDSRERSSDQGGRNEQ) shows a compositional bias: basic and acidic residues. A compositionally biased stretch (low complexity) spans 203–220 (TVTTTTVIVETVSVSAPT).

Belongs to the Nudix hydrolase family. RppH subfamily. The cofactor is a divalent metal cation.

Its function is as follows. Accelerates the degradation of transcripts by removing pyrophosphate from the 5'-end of triphosphorylated RNA, leading to a more labile monophosphorylated state that can stimulate subsequent ribonuclease cleavage. This is RNA pyrophosphohydrolase from Ralstonia pickettii (strain 12J).